The primary structure comprises 454 residues: uncharacterized protein (454 aa).

A disordered region spans residues 422 to 454 (EWLPPAHLDHGQPRTNSYFHPEKLLHDSDEDDP).

The protein belongs to the Rv1128c/1148c/1588c/1702c/1945/3466 family.

This is an uncharacterized protein from Mycobacterium tuberculosis (strain CDC 1551 / Oshkosh).